The chain runs to 677 residues: NADPH--cytochrome P450 reductase (677 aa).

Position 2 is an N-acetylglycine (glycine 2). The Lumenal segment spans residues 2–21 (GDSHVDTSSTVSEAVAEEVS). The helical transmembrane segment at 22 to 42 (LFSMTDMILFSLIVGLLTYWF) threads the bilayer. Over 43–677 (LFRKKKEEVP…KGRYSLDVWS (635 aa)) the chain is Cytoplasmic. Serine 63 is subject to Phosphoserine. A Flavodoxin-like domain is found at 80–224 (IIVFYGSQTG…DFITWREQFW (145 aa)). FMN is bound by residues 86–91 (SQTGTA), 138–141 (ATYG), 173–182 (LGNKTYEHFN), and aspartate 208. Positions 279–521 (KNPFLAAVTT…FVRKSQFRLP (243 aa)) constitute an FAD-binding FR-type domain. An NADP(+)-binding site is contributed by arginine 298. FAD is bound by residues arginine 424, 454-457 (RYYS), 472-474 (CAV), tyrosine 478, and 488-491 (GVAT). NADP(+)-binding positions include threonine 535, 596–597 (SR), 602–606 (KVYVQ), and aspartate 638. Tryptophan 676 is an FAD binding site.

This sequence belongs to the NADPH--cytochrome P450 reductase family. In the N-terminal section; belongs to the flavodoxin family. It in the C-terminal section; belongs to the flavoprotein pyridine nucleotide cytochrome reductase family. FAD serves as cofactor. FMN is required as a cofactor.

It is found in the endoplasmic reticulum membrane. The enzyme catalyses 2 oxidized [cytochrome P450] + NADPH = 2 reduced [cytochrome P450] + NADP(+) + H(+). Its function is as follows. This enzyme is required for electron transfer from NADP to cytochrome P450 in microsomes. It can also provide electron transfer to heme oxygenase and cytochrome B5. The polypeptide is NADPH--cytochrome P450 reductase (Homo sapiens (Human)).